Here is a 258-residue protein sequence, read N- to C-terminus: NAD kinase (258 aa).

Residue aspartate 51 is the Proton acceptor of the active site. Residues aspartate 51 to glycine 52, lysine 56, asparagine 119 to aspartate 120, lysine 130, aspartate 149, threonine 160 to serine 165, and alanine 184 contribute to the NAD(+) site.

Belongs to the NAD kinase family. Requires a divalent metal cation as cofactor.

The protein resides in the cytoplasm. It catalyses the reaction NAD(+) + ATP = ADP + NADP(+) + H(+). Involved in the regulation of the intracellular balance of NAD and NADP, and is a key enzyme in the biosynthesis of NADP. Catalyzes specifically the phosphorylation on 2'-hydroxyl of the adenosine moiety of NAD to yield NADP. In Thermotoga petrophila (strain ATCC BAA-488 / DSM 13995 / JCM 10881 / RKU-1), this protein is NAD kinase.